The chain runs to 243 residues: Geranylgeranylglyceryl phosphate synthase (243 aa).

The Mg(2+) site is built by Asp29 and Ser58. Residues 178-184 (YLEAGSG), 209-210 (GG), and 231-232 (GT) each bind sn-glycerol 1-phosphate.

This sequence belongs to the GGGP/HepGP synthase family. Group II subfamily. In terms of assembly, homodimer. Requires Mg(2+) as cofactor.

It catalyses the reaction sn-glycerol 1-phosphate + (2E,6E,10E)-geranylgeranyl diphosphate = sn-3-O-(geranylgeranyl)glycerol 1-phosphate + diphosphate. Prenyltransferase that catalyzes the transfer of the geranylgeranyl moiety of geranylgeranyl diphosphate (GGPP) to the C3 hydroxyl of sn-glycerol-1-phosphate (G1P). The protein is Geranylgeranylglyceryl phosphate synthase of Flavobacterium johnsoniae (strain ATCC 17061 / DSM 2064 / JCM 8514 / BCRC 14874 / CCUG 350202 / NBRC 14942 / NCIMB 11054 / UW101) (Cytophaga johnsonae).